We begin with the raw amino-acid sequence, 221 residues long: Glutathione S-transferase Z1 (221 aa).

Positions 7–88 (EKLKLYSYWR…YLDEKYPEPP (82 aa)) constitute a GST N-terminal domain. Glutathione contacts are provided by residues 17 to 18 (SS), 17 to 22 (SSCAHR), Gln-46, 46 to 47 (QF), 59 to 60 (TV), Val-60, 72 to 73 (DS), Gln-112, and 116 to 118 (NLA). One can recognise a GST C-terminal domain in the interval 93–218 (DLHKRAVNYQ…LPEKQPDAPS (126 aa)).

This sequence belongs to the GST superfamily. Zeta family. In terms of assembly, homodimer.

It localises to the cytoplasm. The protein localises to the cytosol. It catalyses the reaction RX + glutathione = an S-substituted glutathione + a halide anion + H(+). Acts a maleylacetone isomerase. Also catalyzes the glutathione-dependent dehalogenation of dichloroacetic acid to glyoxylic acid. In vitro, possesses glutathione peroxidase activity toward cumene hydroperoxide and linoleic acid-13-hydroperoxide. In Arabidopsis thaliana (Mouse-ear cress), this protein is Glutathione S-transferase Z1 (GSTZ1).